A 404-amino-acid polypeptide reads, in one-letter code: LL-diaminopimelate aminotransferase (404 aa).

Substrate is bound by residues Y15 and G42. Pyridoxal 5'-phosphate contacts are provided by residues Y72, 108-109, Y132, N188, Y219, and 247-249; these read AK and SFS. 3 residues coordinate substrate: K109, Y132, and N188. N6-(pyridoxal phosphate)lysine is present on K250. Residues R258 and N288 each contribute to the pyridoxal 5'-phosphate site. Residues N288 and R384 each coordinate substrate.

The protein belongs to the class-I pyridoxal-phosphate-dependent aminotransferase family. LL-diaminopimelate aminotransferase subfamily. Homodimer. Pyridoxal 5'-phosphate is required as a cofactor.

The catalysed reaction is (2S,6S)-2,6-diaminopimelate + 2-oxoglutarate = (S)-2,3,4,5-tetrahydrodipicolinate + L-glutamate + H2O + H(+). Its pathway is amino-acid biosynthesis; L-lysine biosynthesis via DAP pathway; LL-2,6-diaminopimelate from (S)-tetrahydrodipicolinate (aminotransferase route): step 1/1. In terms of biological role, involved in the synthesis of meso-diaminopimelate (m-DAP or DL-DAP), required for both lysine and peptidoglycan biosynthesis. Catalyzes the direct conversion of tetrahydrodipicolinate to LL-diaminopimelate. The polypeptide is LL-diaminopimelate aminotransferase (Agathobacter rectalis (strain ATCC 33656 / DSM 3377 / JCM 17463 / KCTC 5835 / VPI 0990) (Eubacterium rectale)).